We begin with the raw amino-acid sequence, 437 residues long: Tol-Pal system protein TolB (437 aa).

A signal peptide spans 1-23 (MQKRHPIIYLLITLLIFVPVSYG).

The protein belongs to the TolB family. As to quaternary structure, the Tol-Pal system is composed of five core proteins: the inner membrane proteins TolA, TolQ and TolR, the periplasmic protein TolB and the outer membrane protein Pal. They form a network linking the inner and outer membranes and the peptidoglycan layer.

Its subcellular location is the periplasm. In terms of biological role, part of the Tol-Pal system, which plays a role in outer membrane invagination during cell division and is important for maintaining outer membrane integrity. The chain is Tol-Pal system protein TolB from Coxiella burnetii (strain RSA 493 / Nine Mile phase I).